The chain runs to 322 residues: Exosome complex component RRP4 homolog (322 aa).

Residues 94-172 (GDIVVGRVIE…HDGSLQLQAR (79 aa)) form the S1 motif domain. The region spanning 182–237 (GQLLKVDPYLVKRSKHHFHYVESLGIDLIIGCNGFIWVGEHVEVRDPMAIDDQKDE) is the KH domain.

Belongs to the RRP4 family. Component of the RNA exosome complex. Interacts with RPP41. In terms of tissue distribution, expressed in roots, stems, rosette and cauline leaves, flowers and siliques.

It is found in the cytoplasm. It localises to the nucleus. The protein resides in the nucleolus. Functionally, non-catalytic component of the RNA exosome complex which has 3'-&gt;5' exoribonuclease activity and participates in a multitude of cellular RNA processing, maturation and degradation events. In vitro, is an active and distributive 3'-&gt;5' exonuclease requiring a free 3'-OH on the substrate and releasing nucleoside 5'-monophosphates. Required for normal embryo development. This chain is Exosome complex component RRP4 homolog, found in Arabidopsis thaliana (Mouse-ear cress).